The primary structure comprises 1040 residues: Multidrug resistance protein MdtB (1040 aa).

The next 12 helical transmembrane spans lie at phenylalanine 16–isoleucine 36, leucine 347–alanine 367, isoleucine 369–leucine 389, leucine 396–isoleucine 416, isoleucine 440–phenylalanine 460, phenylalanine 472–proline 492, tryptophan 537–isoleucine 557, leucine 863–isoleucine 883, phenylalanine 888–alanine 908, isoleucine 911–valine 931, isoleucine 968–valine 988, and isoleucine 998–isoleucine 1018.

This sequence belongs to the resistance-nodulation-cell division (RND) (TC 2.A.6) family. MdtB subfamily. In terms of assembly, part of a tripartite efflux system composed of MdtA, MdtB and MdtC. MdtB forms a heteromultimer with MdtC.

The protein resides in the cell inner membrane. In terms of biological role, the MdtABC tripartite complex confers resistance against novobiocin and deoxycholate. This chain is Multidrug resistance protein MdtB, found in Escherichia coli (strain SE11).